Reading from the N-terminus, the 288-residue chain is ATP synthase subunit a (288 aa).

6 helical membrane passes run 47–67 (LDSM…FWLV), 104–124 (LIAP…LMDL), 157–177 (DPNI…YYSI), 199–219 (PIAK…TLIA), 237–257 (LIFV…SVPW), and 258–278 (AIFH…LTIV).

The protein belongs to the ATPase A chain family. In terms of assembly, F-type ATPases have 2 components, CF(1) - the catalytic core - and CF(0) - the membrane proton channel. CF(1) has five subunits: alpha(3), beta(3), gamma(1), delta(1), epsilon(1). CF(0) has three main subunits: a(1), b(2) and c(9-12). The alpha and beta chains form an alternating ring which encloses part of the gamma chain. CF(1) is attached to CF(0) by a central stalk formed by the gamma and epsilon chains, while a peripheral stalk is formed by the delta and b chains.

It localises to the cell inner membrane. In terms of biological role, key component of the proton channel; it plays a direct role in the translocation of protons across the membrane. The chain is ATP synthase subunit a from Psychrobacter sp. (strain PRwf-1).